The primary structure comprises 56 residues: Large ribosomal subunit protein bL33 (56 aa).

Belongs to the bacterial ribosomal protein bL33 family.

This chain is Large ribosomal subunit protein bL33, found in Aliarcobacter butzleri (strain RM4018) (Arcobacter butzleri).